Consider the following 102-residue polypeptide: 10 kDa heat shock protein, mitochondrial (102 aa).

Position 2 is an N-acetylalanine (A2). K8 carries the post-translational modification N6-acetyllysine. At K28 the chain carries N6-succinyllysine. N6-acetyllysine; alternate is present on K40. N6-malonyllysine; alternate occurs at positions 40, 54, and 56. N6-succinyllysine; alternate is present on residues K40, K54, K56, K66, and K70. An N6-acetyllysine; alternate mark is found at K56, K66, and K70. T79 is modified (phosphothreonine). K80 and K86 each carry N6-acetyllysine; alternate. K80 and K86 each carry N6-succinyllysine; alternate. K99 is modified (N6-acetyllysine).

The protein belongs to the GroES chaperonin family. As to quaternary structure, homoheptamer arranged in a ring structure. 2 heptameric Hsp10 rings interact with a Hsp60 tetradecamer in the structure of a back-to-back double heptameric ring to form the symmetrical football complex.

The protein resides in the mitochondrion matrix. Co-chaperonin implicated in mitochondrial protein import and macromolecular assembly. Together with Hsp60, facilitates the correct folding of imported proteins. May also prevent misfolding and promote the refolding and proper assembly of unfolded polypeptides generated under stress conditions in the mitochondrial matrix. The functional units of these chaperonins consist of heptameric rings of the large subunit Hsp60, which function as a back-to-back double ring. In a cyclic reaction, Hsp60 ring complexes bind one unfolded substrate protein per ring, followed by the binding of ATP and association with 2 heptameric rings of the co-chaperonin Hsp10. This leads to sequestration of the substrate protein in the inner cavity of Hsp60 where, for a certain period of time, it can fold undisturbed by other cell components. Synchronous hydrolysis of ATP in all Hsp60 subunits results in the dissociation of the chaperonin rings and the release of ADP and the folded substrate protein. This chain is 10 kDa heat shock protein, mitochondrial (Hspe1), found in Rattus norvegicus (Rat).